The primary structure comprises 505 residues: MSQHVMFNAVLSSHPALFIQGEWRIGNGVSFEKQDPMSQQRLWQARAADHTDVTLACHAARAAFPAWARASLEQRATVIQQFAALLEQHKQSLARTISLETSKPYWETLTEVQAMIGKVAISLQAYQTRTGHSQTPMGDSMSVLRHRPHGVLAVFGPYNFPGHLPNGHIVPALLAGNTVVFKPSELTPWTAEETVKLWQEAGIPDGVLNLVQGGRETGEALAAQPDIDGLLFTGSAHTGYHLHRQLAGQPEKMLALEMGGNNALIVEQVKDRDAVVNLAIQSAFISAGQRCTCSRRLLVKTGAEGDAFLLRFTAVAQALRIGRWDEQPAPFMGAVISSQAAERMLAAQQHLLLLGGESLLNMTRPDSQSALLTPGIIDITNISEVPDEEYFGPLVSVIRYTDFTEALKIANQTRFGLAVGLVSEDRQQFEQLLLEARAGIVNWNKPLTGASSAAPFGGVGASGNHRPSAFYAADYCAWPMASLECEHLTLPATLSPGISFDLPKV.

Residue 234 to 239 participates in NAD(+) binding; the sequence is GSAHTG. Active-site residues include Glu-257 and Cys-291.

The protein belongs to the aldehyde dehydrogenase family. AstD subfamily.

The enzyme catalyses N-succinyl-L-glutamate 5-semialdehyde + NAD(+) + H2O = N-succinyl-L-glutamate + NADH + 2 H(+). Its pathway is amino-acid degradation; L-arginine degradation via AST pathway; L-glutamate and succinate from L-arginine: step 4/5. In terms of biological role, catalyzes the NAD-dependent reduction of succinylglutamate semialdehyde into succinylglutamate. The sequence is that of N-succinylglutamate 5-semialdehyde dehydrogenase from Yersinia pseudotuberculosis serotype IB (strain PB1/+).